We begin with the raw amino-acid sequence, 184 residues long: Signal peptidase complex catalytic subunit SEC11 (184 aa).

The Cytoplasmic segment spans residues 1–28; sequence MDFIKEQYNSLVLDLRKTFRNKRDGLSH. The helical; Signal-anchor for type II membrane protein transmembrane segment at 29-49 threads the bilayer; sequence ILNVICLLLNALMIWKLLVVF. At 50–184 the chain is on the lumenal side; that stretch reads TGCESPVVVV…MLIMILMGYE (135 aa). Active-site charge relay system residues include serine 63, histidine 101, and aspartate 127. Residues 170–181 form a C-terminal short (CTS) helix region; it reads AIVSIMLIMILM.

The protein belongs to the peptidase S26B family. Component of the signal peptidase complex (SPC) composed of a catalytic subunit SEC11/SPC21 and three accessory subunits SPC25, SPC3/SPC22, SPC1/SPC12. Within the complex, interacts with SPC25. The complex induces a local thinning of the ER membrane which is used to measure the length of the signal peptide (SP) h-region of protein substrates. This ensures the selectivity of the complex towards h-regions shorter than 18-20 amino acids. The complex interacts with the SEC61 channel-forming translocon complex and is involved in the import of classical signal sequence-containing proteins. Post-translationally, phosphorylated. Phosphorylation increases catalytic activity.

Its subcellular location is the endoplasmic reticulum membrane. The enzyme catalyses Cleavage of hydrophobic, N-terminal signal or leader sequences from secreted and periplasmic proteins.. Phosphorylation increases catalytic activity. Ca(2+) slightly increases catalytic activity in vitro. Its function is as follows. Catalytic component of the signal peptidase complex (SPC) which catalyzes the cleavage of N-terminal signal sequences from nascent proteins as they are translocated into the lumen of the endoplasmic reticulum. Specifically cleaves N-terminal signal peptides that contain a hydrophobic alpha-helix (h-region) shorter than 18-20 amino acids. The protein is Signal peptidase complex catalytic subunit SEC11 of Plasmodium falciparum (isolate 3D7).